The sequence spans 126 residues: Fluoride-specific ion channel FluC (126 aa).

4 helical membrane-spanning segments follow: residues 4–24 (LLLV…TSAW), 36–56 (GTLL…TASL), 67–85 (LFLA…SFNY), and 101–121 (AYLL…TLLV). 2 residues coordinate Na(+): Gly-75 and Thr-78.

This sequence belongs to the fluoride channel Fluc/FEX (TC 1.A.43) family.

Its subcellular location is the cell inner membrane. The catalysed reaction is fluoride(in) = fluoride(out). With respect to regulation, na(+) is not transported, but it plays an essential structural role and its presence is essential for fluoride channel function. Functionally, fluoride-specific ion channel. Important for reducing fluoride concentration in the cell, thus reducing its toxicity. The chain is Fluoride-specific ion channel FluC from Anaeromyxobacter dehalogenans (strain 2CP-1 / ATCC BAA-258).